We begin with the raw amino-acid sequence, 375 residues long: uncharacterized protein (375 aa).

This is an uncharacterized protein from Ureaplasma parvum serovar 3 (strain ATCC 700970).